Here is a 284-residue protein sequence, read N- to C-terminus: 4-diphosphocytidyl-2-C-methyl-D-erythritol kinase (284 aa).

Residue Lys-14 is part of the active site. Residue 98–108 (PMGGGIGGGSS) coordinates ATP. The active site involves Asp-140.

The protein belongs to the GHMP kinase family. IspE subfamily.

It carries out the reaction 4-CDP-2-C-methyl-D-erythritol + ATP = 4-CDP-2-C-methyl-D-erythritol 2-phosphate + ADP + H(+). It participates in isoprenoid biosynthesis; isopentenyl diphosphate biosynthesis via DXP pathway; isopentenyl diphosphate from 1-deoxy-D-xylulose 5-phosphate: step 3/6. Its function is as follows. Catalyzes the phosphorylation of the position 2 hydroxy group of 4-diphosphocytidyl-2C-methyl-D-erythritol. This chain is 4-diphosphocytidyl-2-C-methyl-D-erythritol kinase, found in Shewanella loihica (strain ATCC BAA-1088 / PV-4).